A 494-amino-acid polypeptide reads, in one-letter code: Tripartite motif-containing protein 5 (494 aa).

Position 2 is an N-acetylalanine (alanine 2). The segment at cysteine 15–arginine 59 adopts an RING-type zinc-finger fold. At serine 86 the chain carries Phosphoserine. The B box-type zinc finger occupies glutamine 91–glutamate 133. Zn(2+) is bound by residues cysteine 96, histidine 99, cysteine 118, and histidine 124. Residues threonine 132–glutamine 241 adopt a coiled-coil conformation. The required for interaction with GABARAP and for autophagy stretch occupies residues phenylalanine 186–asparagine 199. Positions leucine 282 to serine 494 constitute a B30.2/SPRY domain.

It belongs to the TRIM/RBCC family. In terms of assembly, can form homodimers and homotrimers. In addition to lower-order dimerization, also exhibits a higher-order multimerization and both low- and high-order multimerizations are essential for its restriction activity. Interacts with BTBD1 and BTBD2. Interacts with PSMC4, PSMC5, PSMD7 and HSPA8/HSC70. Interacts (via B30.2/SPRY domain) with HSPA1A/B. Interacts with PSMC2, MAP3K7/TAK1, TAB2 and TAB3. Interacts with SQSTM1. Interacts with TRIM6 and TRIM34. Interacts with ULK1 (phosphorylated form), GABARAP, GABARAPL1, GABARAPL2, MAP1LC3A, MAP1LC3C and BECN1. Degraded in a proteasome-independent fashion in the absence of viral infection but in a proteasome-dependent fashion following exposure to restriction sensitive virus. Post-translationally, autoubiquitinated in a RING finger- and UBE2D2-dependent manner. Monoubiquitinated by TRIM21. Deubiquitinated by Yersinia YopJ. Ubiquitination may not lead to proteasomal degradation.

The protein resides in the cytoplasm. Its subcellular location is the nucleus. It carries out the reaction S-ubiquitinyl-[E2 ubiquitin-conjugating enzyme]-L-cysteine + [acceptor protein]-L-lysine = [E2 ubiquitin-conjugating enzyme]-L-cysteine + N(6)-ubiquitinyl-[acceptor protein]-L-lysine.. Its pathway is protein modification; protein ubiquitination. Its function is as follows. Capsid-specific restriction factor that prevents infection from non-host-adapted retroviruses. Blocks viral replication early in the life cycle, after viral entry but before reverse transcription. In addition to acting as a capsid-specific restriction factor, also acts as a pattern recognition receptor that activates innate immune signaling in response to the retroviral capsid lattice. Binding to the viral capsid triggers its E3 ubiquitin ligase activity, and in concert with the heterodimeric ubiquitin conjugating enzyme complex UBE2V1-UBE2N (also known as UBC13-UEV1A complex) generates 'Lys-63'-linked polyubiquitin chains, which in turn are catalysts in the autophosphorylation of the MAP3K7/TAK1 complex (includes TAK1, TAB2, and TAB3). Activation of the MAP3K7/TAK1 complex by autophosphorylation results in the induction and expression of NF-kappa-B and MAPK-responsive inflammatory genes, thereby leading to an innate immune response in the infected cell. Plays a role in regulating autophagy through activation of autophagy regulator BECN1 by causing its dissociation from its inhibitors BCL2 and TAB2. This is Tripartite motif-containing protein 5 (TRIM5) from Symphalangus syndactylus (Siamang).